A 235-amino-acid polypeptide reads, in one-letter code: tRNA (guanine-N(1)-)-methyltransferase (235 aa).

S-adenosyl-L-methionine contacts are provided by residues Gly-112 and 132-137 (IGDYVI).

The protein belongs to the RNA methyltransferase TrmD family. Homodimer.

The protein resides in the cytoplasm. It catalyses the reaction guanosine(37) in tRNA + S-adenosyl-L-methionine = N(1)-methylguanosine(37) in tRNA + S-adenosyl-L-homocysteine + H(+). Its function is as follows. Specifically methylates guanosine-37 in various tRNAs. This chain is tRNA (guanine-N(1)-)-methyltransferase, found in Anaplasma marginale (strain St. Maries).